The chain runs to 342 residues: UDP-3-O-acylglucosamine N-acyltransferase (342 aa).

H242 serves as the catalytic Proton acceptor.

The protein belongs to the transferase hexapeptide repeat family. LpxD subfamily. In terms of assembly, homotrimer.

It carries out the reaction a UDP-3-O-[(3R)-3-hydroxyacyl]-alpha-D-glucosamine + a (3R)-hydroxyacyl-[ACP] = a UDP-2-N,3-O-bis[(3R)-3-hydroxyacyl]-alpha-D-glucosamine + holo-[ACP] + H(+). It participates in bacterial outer membrane biogenesis; LPS lipid A biosynthesis. Functionally, catalyzes the N-acylation of UDP-3-O-acylglucosamine using 3-hydroxyacyl-ACP as the acyl donor. Is involved in the biosynthesis of lipid A, a phosphorylated glycolipid that anchors the lipopolysaccharide to the outer membrane of the cell. The sequence is that of UDP-3-O-acylglucosamine N-acyltransferase from Leptothrix cholodnii (strain ATCC 51168 / LMG 8142 / SP-6) (Leptothrix discophora (strain SP-6)).